Consider the following 346-residue polypeptide: Transcription factor 19 (346 aa).

One can recognise an FHA domain in the interval 31–88 (YRLGCRADLCDVALRPQQEPGFISEVHAELHAERRGDDWRVSLEDHSSQGTLVNNVRL). Phosphoserine is present on serine 78. 2 disordered regions span residues 136-168 (PRSR…TLSP) and 190-289 (LTFS…AAGG). Over residues 138 to 147 (SRGEEGETRA) the composition is skewed to basic and acidic residues. The span at 190 to 208 (LTFSRSGSGPQNPPVSTTP) shows a compositional bias: polar residues. Residues 250 to 260 (EPRKKLLRVEK) are compositionally biased toward basic and acidic residues. The segment at 294–343 (AAPCCCLPQEETVAWVQCDGCDTWFHVACVGCSIQAAKEADFRCPGCRVG) adopts a PHD-type zinc-finger fold. The Zn(2+) site is built by cysteine 297, cysteine 299, cysteine 311, cysteine 314, histidine 319, cysteine 322, cysteine 337, and cysteine 340.

It is found in the nucleus. Functionally, potential transcription factor that may play a role in the regulation of genes involved in cell cycle G1/S transition. May bind to regulatory elements of genes, including the promoter of the transcription factor FOXO1. This is Transcription factor 19 (TCF19) from Sus scrofa (Pig).